A 101-amino-acid polypeptide reads, in one-letter code: Protein RnfH (101 aa).

This sequence belongs to the UPF0125 (RnfH) family.

This Coxiella burnetii (strain CbuK_Q154) (Coxiella burnetii (strain Q154)) protein is Protein RnfH.